The following is a 71-amino-acid chain: Antitoxin VapB22 (71 aa).

The protein belongs to the phD/YefM antitoxin family.

Its function is as follows. Antitoxin component of a type II toxin-antitoxin (TA) system. Upon expression in M.smegmatis neutralizes the effect of cognate toxin VapC22. The sequence is that of Antitoxin VapB22 (vapB22) from Mycobacterium tuberculosis (strain ATCC 25618 / H37Rv).